Here is a 429-residue protein sequence, read N- to C-terminus: 3-phosphoshikimate 1-carboxyvinyltransferase (429 aa).

3-phosphoshikimate-binding residues include K23, S24, and R28. K23 provides a ligand contact to phosphoenolpyruvate. Phosphoenolpyruvate contacts are provided by G95 and R123. 4 residues coordinate 3-phosphoshikimate: S168, Q170, D316, and K343. Q170 is a phosphoenolpyruvate binding site. The active-site Proton acceptor is the D316. The phosphoenolpyruvate site is built by R347 and R389.

Belongs to the EPSP synthase family. As to quaternary structure, monomer.

Its subcellular location is the cytoplasm. It catalyses the reaction 3-phosphoshikimate + phosphoenolpyruvate = 5-O-(1-carboxyvinyl)-3-phosphoshikimate + phosphate. It participates in metabolic intermediate biosynthesis; chorismate biosynthesis; chorismate from D-erythrose 4-phosphate and phosphoenolpyruvate: step 6/7. In terms of biological role, catalyzes the transfer of the enolpyruvyl moiety of phosphoenolpyruvate (PEP) to the 5-hydroxyl of shikimate-3-phosphate (S3P) to produce enolpyruvyl shikimate-3-phosphate and inorganic phosphate. The protein is 3-phosphoshikimate 1-carboxyvinyltransferase of Bacillus cereus (strain ATCC 10987 / NRS 248).